Reading from the N-terminus, the 413-residue chain is Serine/threonine transporter SstT (413 aa).

9 helical membrane passes run 11–31 (IANG…VILA), 43–63 (FLGS…VFVL), 82–102 (IIGL…LFSF), 141–161 (ALLT…GITM), 192–212 (IGIF…ALAG), 216–236 (LLMV…PIIV), 298–318 (MGGA…TLGI), 339–359 (ASGV…LFGI), and 363–383 (VAMQ…SAET).

This sequence belongs to the dicarboxylate/amino acid:cation symporter (DAACS) (TC 2.A.23) family.

Its subcellular location is the cell inner membrane. The catalysed reaction is L-serine(in) + Na(+)(in) = L-serine(out) + Na(+)(out). It carries out the reaction L-threonine(in) + Na(+)(in) = L-threonine(out) + Na(+)(out). Functionally, involved in the import of serine and threonine into the cell, with the concomitant import of sodium (symport system). This Shewanella frigidimarina (strain NCIMB 400) protein is Serine/threonine transporter SstT.